A 1217-amino-acid polypeptide reads, in one-letter code: Myosin-5 (1217 aa).

The segment covering 1-11 (MAILKRGARNK) has biased composition (basic residues). The tract at residues 1–24 (MAILKRGARNKTHQEPAKRGGNNI) is disordered. The Myosin motor domain maps to 37–716 (VGVSDLTLLT…TLFALENMRD (680 aa)). An ATP-binding site is contributed by 130-137 (GESGAGKT). Serine 358 is subject to Phosphoserine. An actin-binding region spans residues 405 to 487 (SIGILDIYGF…PGIFAAMNDS (83 aa)). 2 consecutive IQ domains span residues 720 to 740 (HNMAARIQRAWRRYLQRRIDA) and 741 to 766 (AVKIQRTIKERKEGNKFEKLRDYGTS). A TH1 domain is found at 772-962 (KERRSMSLLG…TIFVRRGNPA (191 aa)). Disordered stretches follow at residues 956–1102 (VRRG…NPSE), 1145–1174 (GAKAPPPAPAVTASQPAIQNQSQPASAQTV), and 1197–1217 (NKMRVESDEEAAASSDNDDDW). Basic residues predominate over residues 965–974 (KSKKKPRKKS). Over residues 976–987 (GMSAPTTQSSKT) the composition is skewed to polar residues. A compositionally biased stretch (low complexity) spans 994–1007 (SSNNQNTTVSQSLN). The span at 1025-1038 (PAPPPPGSKKPAPQ) shows a compositional bias: pro residues. A compositionally biased stretch (low complexity) spans 1050-1071 (PQAQMQTQTQIPASQSSATQSS). A compositionally biased stretch (pro residues) spans 1072–1081 (IPPPPPPPPS). In terms of domain architecture, SH3 spans 1083–1145 (TSEPQFEAAY…PTAYMVKHEG (63 aa)). Polar residues predominate over residues 1162–1174 (IQNQSQPASAQTV). The segment covering 1203–1217 (SDEEAAASSDNDDDW) has biased composition (acidic residues).

The protein belongs to the TRAFAC class myosin-kinesin ATPase superfamily. Myosin family. Post-translationally, phosphorylation of the TEDS site (Ser-358) is required for the polarization of the actin cytoskeleton. Phosphorylation probably activates the myosin-I ATPase activity.

Its subcellular location is the cytoplasm. The protein localises to the cytoskeleton. It is found in the actin patch. In terms of biological role, type-I myosin implicated in the organization of the actin cytoskeleton. Required for proper actin cytoskeleton polarization. At the cell cortex, assembles in patch-like structures together with proteins from the actin-polymerizing machinery and promotes actin assembly. Functions as actin nucleation-promoting factor (NPF) for the Arp2/3 complex. The sequence is that of Myosin-5 (MYO5) from Candida glabrata (strain ATCC 2001 / BCRC 20586 / JCM 3761 / NBRC 0622 / NRRL Y-65 / CBS 138) (Yeast).